Reading from the N-terminus, the 287-residue chain is Putative daunorubicin C-13 ketoreductase DnrU (287 aa).

Residue 24–30 participates in NADP(+) binding; that stretch reads GATSGIG. Ser149 is a binding site for substrate. Tyr175 serves as the catalytic Proton acceptor.

This sequence belongs to the short-chain dehydrogenases/reductases (SDR) family.

Functionally, could reduce the 13-carbonyl of daunorubicin to produce (13S)-13-dihydrodaunorubicin. Could also be able to reduce the 13-carbonyl of doxorubicin. In Streptomyces sp. (strain C5), this protein is Putative daunorubicin C-13 ketoreductase DnrU.